The sequence spans 227 residues: E3 ubiquitin-protein ligase ZNRF1 (227 aa).

A disordered region spans residues 1–38 (MGGKQSTAARSRGPFPGVSTDDSAVPPPGGAPHFGHYR). The N-myristoyl glycine moiety is linked to residue Gly-2. The interval 2–10 (GGKQSTAAR) is required for endosomal and lysosomal localization and myristoylation. Phosphoserine occurs at positions 50, 52, and 53. The segment at 77 to 105 (RGAGDAERAPGSGGSASDSTYAHGNGYQE) is disordered. Position 103 is a phosphotyrosine (Tyr-103). The residue at position 123 (Ser-123) is a Phosphoserine. An RING-type; atypical zinc finger spans residues 184–225 (CVICLEELLQGDTIARLPCLCIYHKSCIDSWFEVNRSCPEHP).

In terms of assembly, interacts with AKT1, GLUL and TUBB2A. Interacts with ZNRF2. Interacts (via its RING domain) with UBE2N. Interacts (when phosphorylated) with YWHAE. In terms of processing, N-myristoylation targets ZNRF1 to intracellular membranes. Post-translationally, phosphorylated by SRC at Tyr-103; leading to 'Lys-63'-linked ubiquitination of TLR3, lysosomal trafficking and degradation.

It localises to the endosome. The protein resides in the lysosome. Its subcellular location is the membrane. It is found in the cytoplasmic vesicle. The protein localises to the secretory vesicle. It localises to the synaptic vesicle membrane. It carries out the reaction S-ubiquitinyl-[E2 ubiquitin-conjugating enzyme]-L-cysteine + [acceptor protein]-L-lysine = [E2 ubiquitin-conjugating enzyme]-L-cysteine + N(6)-ubiquitinyl-[acceptor protein]-L-lysine.. It participates in protein modification; protein ubiquitination. Functionally, E3 ubiquitin-protein ligase that plays a role in different processes including cell differentiation, receptor recycling or regulation of inflammation. Mediates the ubiquitination of AKT1 and GLUL, thereby playing a role in neuron cells differentiation. Plays a role in the establishment and maintenance of neuronal transmission and plasticity. Regulates Schwann cells differentiation by mediating ubiquitination of GLUL. Promotes neurodegeneration by mediating 'Lys-48'-linked polyubiquitination and subsequent degradation of AKT1 in axons: degradation of AKT1 prevents AKT1-mediated phosphorylation of GSK3B, leading to GSK3B activation and phosphorylation of DPYSL2/CRMP2 followed by destabilization of microtubule assembly in axons. Ubiquitinates the Na(+)/K(+) ATPase alpha-1 subunit/ATP1A1 and thereby influences its endocytosis and/or degradation. Controls ligand-induced EGFR signaling via mediating receptor ubiquitination and recruitment of the ESCRT machinery. Acts as a negative feedback mechanism controlling TLR3 trafficking by mediating TLR3 'Lys-63'-linked polyubiquitination to reduce type I IFN production. Modulates inflammation by promoting caveolin-1/CAV1 ubiquitination and degradation to regulate TLR4-activated immune response. The sequence is that of E3 ubiquitin-protein ligase ZNRF1 (ZNRF1) from Bos taurus (Bovine).